We begin with the raw amino-acid sequence, 337 residues long: BRI1 kinase inhibitor 1 (337 aa).

Residues 1 to 25 are compositionally biased toward polar residues; sequence METNLQQVKNSSQTFSEKQNPKQEA. Disordered regions lie at residues 1 to 38 and 51 to 72; these read METNLQQVKNSSQTFSEKQNPKQEASPSPISSTCSSPS and SSSSKHISPTLRSPSKTTSSYQ. Residues 26-38 are compositionally biased toward low complexity; sequence SPSPISSTCSSPS. Position 211 is a phosphotyrosine (Tyr-211). Residues 270–310 form a disordered region; sequence SAPASMRTSPTNSGHLRVSTAGLSSSSGSTSSSSSDSTMEE. Over residues 288-310 the composition is skewed to low complexity; that stretch reads STAGLSSSSGSTSSSSSDSTMEE.

As to quaternary structure, interacts (via C-terminus) with BRI1 (via kinase domain). In terms of processing, phosphorylated on Tyr-211 in response to brassinosteroid perception, leading to its inactivation: once phosphorylated, displaced into the cytosol where it is inactive. In terms of tissue distribution, expressed in leaves, petioles, shoot apices, hypocotyls, roots and flowers.

It localises to the cell membrane. Its subcellular location is the cytoplasm. In terms of biological role, negative regulator of brassinosteroid signaling. When associated to the membrane, limits the interaction of BRI1 with BAK1 by binding to the kinase-inactive form of BRI1. The protein is BRI1 kinase inhibitor 1 (BKI1) of Arabidopsis thaliana (Mouse-ear cress).